A 287-amino-acid polypeptide reads, in one-letter code: Nucleotide-binding protein Sfri_3380 (287 aa).

8–15 (GRSGSGKS) provides a ligand contact to ATP. Residue 56–59 (DVRN) participates in GTP binding.

It belongs to the RapZ-like family.

In terms of biological role, displays ATPase and GTPase activities. In Shewanella frigidimarina (strain NCIMB 400), this protein is Nucleotide-binding protein Sfri_3380.